The primary structure comprises 463 residues: Protein DML1 (463 aa).

Belongs to the misato family.

Its subcellular location is the mitochondrion. Involved in the partitioning of the mitochondrial organelle and mitochondrial DNA (mtDNA) inheritance. The polypeptide is Protein DML1 (DML1) (Debaryomyces hansenii (strain ATCC 36239 / CBS 767 / BCRC 21394 / JCM 1990 / NBRC 0083 / IGC 2968) (Yeast)).